Reading from the N-terminus, the 286-residue chain is Putative L-ribulose-5-phosphate 3-epimerase SgbU (286 aa).

Belongs to the L-ribulose-5-phosphate 3-epimerase family.

The catalysed reaction is L-ribulose 5-phosphate = L-xylulose 5-phosphate. In terms of biological role, catalyzes the isomerization of L-xylulose-5-phosphate to L-ribulose-5-phosphate (Potential). May be involved in the utilization of 2,3-diketo-L-gulonate. The polypeptide is Putative L-ribulose-5-phosphate 3-epimerase SgbU (sgbU) (Escherichia coli (strain K12)).